Reading from the N-terminus, the 178-residue chain is RNA pyrophosphohydrolase (178 aa).

The 154-residue stretch at 18–171 folds into the Nudix hydrolase domain; sequence PYRPCVGLMV…KRKVYEQVVA (154 aa). A Nudix box motif is present at residues 59–80; it reads GGIDKGEDPAQAALRELYEETG.

It belongs to the Nudix hydrolase family. RppH subfamily. The cofactor is a divalent metal cation.

In terms of biological role, accelerates the degradation of transcripts by removing pyrophosphate from the 5'-end of triphosphorylated RNA, leading to a more labile monophosphorylated state that can stimulate subsequent ribonuclease cleavage. The chain is RNA pyrophosphohydrolase from Brucella melitensis biotype 2 (strain ATCC 23457).